The following is a 230-amino-acid chain: Cytidylate kinase (230 aa).

12 to 20 contributes to the ATP binding site; sequence GPSGAGKGT.

This sequence belongs to the cytidylate kinase family. Type 1 subfamily.

It localises to the cytoplasm. It catalyses the reaction CMP + ATP = CDP + ADP. The enzyme catalyses dCMP + ATP = dCDP + ADP. In Shewanella sediminis (strain HAW-EB3), this protein is Cytidylate kinase.